Consider the following 638-residue polypeptide: MYQLTLPDKSIKEVASGFTYRDFIEKELPFLKNKALAVRLNGEEILDLSRTVEKNSNIEVLTYSEKLGWETFQHSAAHLLGMAVQNLYKNANLTVGPVIDNGPGFFYYDIDFQGAIVTPEDFPKIEAEMEKIVKADHPVWRKVVSKKQAIETFQKLGEKYKIEIIDGIPSEEVSIYGMGEWFDLCRGPHVPNSGVLKSFKLTAISGAYWKADKNNSMLTRIYGVAFPTKKELDQYLFQIEEAKKRDHRKIGKEMDLFSFQKEGPGFPFWHPKGTILWNSLAEYLRSECNKRGYQEIKTPAVLSSELWKKSGHWDNFHENMYFTDIDEEDYALKPMNCPGCSLIYKHHLHSYRELPLRFAEFGSVHRHELHGVLHGLFRVRAFTQDDSHIYAPLDYLESEVMDIIDFTFTVYKKFGFSEFKTFIATRPEKSQGKDEDWEFATSTLKQSLEKKGIPYGIKEGEGAFYGPKIEFNIKDSIGRLWQCGTIQVDFSMPERFDLDYTDSDGQKKRPVMIHRAIYGSLERFIGILIEHYEGKFPLWISPNQIRILTVTEKVTDYAKNVYRELLDSGFRVELDTRNEKIGAKIRDSILKKANYLLILGEKEMESNTLAVRMRGQEDTKILTRTGFISNLQDEIKSS.

Residues 1 to 62 form the TGS domain; that stretch reads MYQLTLPDKS…EKNSNIEVLT (62 aa). The segment at 246-537 is catalytic; it reads DHRKIGKEMD…LIEHYEGKFP (292 aa). Cys-337, His-388, and His-514 together coordinate Zn(2+).

It belongs to the class-II aminoacyl-tRNA synthetase family. As to quaternary structure, homodimer. It depends on Zn(2+) as a cofactor.

The protein localises to the cytoplasm. It catalyses the reaction tRNA(Thr) + L-threonine + ATP = L-threonyl-tRNA(Thr) + AMP + diphosphate + H(+). Its function is as follows. Catalyzes the attachment of threonine to tRNA(Thr) in a two-step reaction: L-threonine is first activated by ATP to form Thr-AMP and then transferred to the acceptor end of tRNA(Thr). Also edits incorrectly charged L-seryl-tRNA(Thr). This is Threonine--tRNA ligase from Leptospira interrogans serogroup Icterohaemorrhagiae serovar copenhageni (strain Fiocruz L1-130).